The chain runs to 1555 residues: Pre-mRNA cleavage complex 2 protein Pcf11 (1555 aa).

S2 carries the N-acetylserine modification. The CID domain occupies 14-142 (AREDACRDYQ…ALDVRVNSLD (129 aa)). At S120 the chain carries Phosphoserine; by WNK1. T121 is subject to Phosphothreonine; by WNK1. The disordered stretch occupies residues 167–186 (NKSPEEPSTPGTVVSSPSIS). A phosphoserine mark is found at S169 and S182. Positions 174–186 (STPGTVVSSPSIS) are enriched in low complexity. Positions 202–239 (QLIRQQLLAKQKQLLELQQKKLELELEQAKAQLAVSLS) form a coiled coil. The tract at residues 266–648 (VKAPHQVPVQ…QQQHRLSVDA (383 aa)) is disordered. K291 participates in a covalent cross-link: Glycyl lysine isopeptide (Lys-Gly) (interchain with G-Cter in SUMO2). Over residues 307–317 (HGKDQSHRKEF) the composition is skewed to basic and acidic residues. Residues 320–333 (NTLNQSDTKTSKTI) are compositionally biased toward polar residues. A Glycyl lysine isopeptide (Lys-Gly) (interchain with G-Cter in SUMO2) cross-link involves residue K328. Composition is skewed to basic and acidic residues over residues 342-364 (KQEKSKSGEKITKKELDQLDSKS), 380-421 (HTKD…DVKE), and 427-442 (EKKDKDEHMKSSEHRL). Residue K456 forms a Glycyl lysine isopeptide (Lys-Gly) (interchain with G-Cter in SUMO2) linkage. T459 carries the post-translational modification Phosphothreonine. Positions 475-486 (STRKRSRSRSPK) are enriched in basic residues. Phosphoserine occurs at positions 489, 494, 509, and 511. Positions 494–508 (SPKRRDRRSPKRRQR) are enriched in basic residues. The span at 529–567 (SHMEEFTPPSREDRNAKRSTKQDIRDPRRMKKTEEERPQ) shows a compositional bias: basic and acidic residues. A compositionally biased stretch (polar residues) spans 568–578 (ETTNQHSTKSG). Residues 599 to 615 (SGWEENKSLQQVDEHSK) are compositionally biased toward basic and acidic residues. Position 645 is a phosphoserine (S645). Residue K654 forms a Glycyl lysine isopeptide (Lys-Gly) (interchain with G-Cter in SUMO2) linkage. S705 carries the phosphoserine modification. Disordered regions lie at residues 707-732 (FNDRFPLKRPRYEDSDKPFVDSPASR) and 749-781 (RPLFDGPSRPSVARDGPTKMIFEGPNKLSPRID). Positions 716–725 (PRYEDSDKPF) are enriched in basic and acidic residues. Residue K723 forms a Glycyl lysine isopeptide (Lys-Gly) (interchain with G-Cter in SUMO2) linkage. A phosphoserine mark is found at S728 and S777. T785 is modified (phosphothreonine). A Phosphoserine modification is found at S794. Asymmetric dimethylarginine occurs at positions 805, 820, and 833. S851 is modified (phosphoserine). Residues R929, R942, R955, R981, R994, and R1007 each carry the asymmetric dimethylarginine modification. The interval 1056–1081 (HGQPGPRFERTPGQPGPQRFDGPPGQ) is disordered. An asymmetric dimethylarginine mark is found at R1093 and R1104. 2 disordered regions span residues 1127 to 1147 (VSFNQTGPYNDPPGNAFNAPS) and 1159 to 1187 (FDSPQGPNFNGPHGPGNQSFSNPLNRASG). A Phosphoserine modification is found at S1161. Over residues 1162 to 1175 (PQGPNFNGPHGPGN) the composition is skewed to low complexity. K1278 participates in a covalent cross-link: Glycyl lysine isopeptide (Lys-Gly) (interchain with G-Cter in SUMO2). A compositionally biased stretch (polar residues) spans 1289–1298 (SATTQVSEVT). The interval 1289-1315 (SATTQVSEVTAQPPPEEEEDQNEDQDV) is disordered. A compositionally biased stretch (acidic residues) spans 1303–1315 (PEEEEDQNEDQDV). Glycyl lysine isopeptide (Lys-Gly) (interchain with G-Cter in SUMO2) cross-links involve residues K1419, K1511, and K1524. Positions 1516–1555 (EPCDSPKVKEERIDTPPACTEESIATPSEIKTENDTVESV) are disordered. Positions 1519-1529 (DSPKVKEERID) are enriched in basic and acidic residues. T1530 is modified (phosphothreonine). K1546 is covalently cross-linked (Glycyl lysine isopeptide (Lys-Gly) (interchain with G-Cter in SUMO2)).

Associates with the phosphorylated CTD domain of POLR2A /RNA polymerase II. In terms of processing, phosphorylation at Ser-120 and/or Thr-121 by WNK1 weakens its association with POLR2A/RNA polymerase II, promoting transcript release from the chromatin template and mRNA export to the cytoplasm.

The protein localises to the nucleus. Its function is as follows. Component of pre-mRNA cleavage complex II, which promotes transcription termination by RNA polymerase II. This chain is Pre-mRNA cleavage complex 2 protein Pcf11, found in Homo sapiens (Human).